The primary structure comprises 1519 residues: DNA (cytosine-5)-methyltransferase 4 (1519 aa).

Residues 1 to 24 (MEMETKAGKQKKRSVDSDDDVSKE) are compositionally biased toward basic and acidic residues. A disordered region spans residues 1-31 (MEMETKAGKQKKRSVDSDDDVSKERRPKRAA). A Glycyl lysine isopeptide (Lys-Gly) (interchain with G-Cter in ubiquitin) cross-link involves residue K583. The interval 641 to 668 (ENVEEEELEEVEEEDENEEDDPEENELE) is disordered. Residues 642–668 (NVEEEELEEVEEEDENEEDDPEENELE) show a composition bias toward acidic residues. 2 consecutive BAH domains span residues 715–849 (DVVV…FSLP) and 916–1033 (TTLK…KQFP). The SAM-dependent MTase C5-type domain maps to 1078–1512 (LATLDIFAGC…RKLKEALYLK (435 aa)). C1183 is a catalytic residue.

It belongs to the class I-like SAM-binding methyltransferase superfamily. C5-methyltransferase family. In terms of tissue distribution, expressed at low levels in vegetative and floral organs.

The protein localises to the nucleus. The catalysed reaction is a 2'-deoxycytidine in DNA + S-adenosyl-L-methionine = a 5-methyl-2'-deoxycytidine in DNA + S-adenosyl-L-homocysteine + H(+). Its function is as follows. Maintains chromatin CpG methylation that plays a role in genomic imprinting, regulation of embryogenesis and seed viability. Required for proper patterns of CG DNA methylation in dividing cells. In Arabidopsis thaliana (Mouse-ear cress), this protein is DNA (cytosine-5)-methyltransferase 4 (MET4).